A 325-amino-acid polypeptide reads, in one-letter code: MRPILLQGHERSITQIKYNRDGDLLFTVAKDPVVNVWYSVNGERLGTYNGHTGAVWCVDVDWETRHVLSGSADNSCRLWDCETGKQLALLQTNSAVRTCGFDFGGNIIMFSTDKQMGYQCFVSFIDLRDPSQIEDNEPYMKIPCSESKITSAVWGPLGENIIAGHENGELNHYSAKSGEIVNSIKEHSKQINDIQTSRDMTMFVTASKDCTSKLFDSTSLEHQKTFRTERPVNSAAVSPIYDHVVLGGGQEAMDVTTTSTRIGKFEARFFHVAFEEEFGRVKGHFGPINSLAFHPDGKSYSSGGEDGYVRIHYFDPQYFDFEFES.

WD repeat units lie at residues 8 to 47, 50 to 91, 144 to 183, 186 to 225, and 283 to 324; these read GHER…RLGT, GHTG…ALLQ, CSES…IVNS, EHSK…HQKT, and GHFG…FEFE.

Belongs to the eIF-3 subunit I family. In terms of assembly, component of the eukaryotic translation initiation factor 3 (eIF-3) complex, which is composed of 13 subunits: eif3a, eif3b, eif3c, eif3d, eif3e, eif3f, eif3g, eif3h, eif3i, eif3j, eif3k, eif3l and eif3m.

It localises to the cytoplasm. Functionally, component of the eukaryotic translation initiation factor 3 (eIF-3) complex, which is involved in protein synthesis of a specialized repertoire of mRNAs and, together with other initiation factors, stimulates binding of mRNA and methionyl-tRNAi to the 40S ribosome. The eIF-3 complex specifically targets and initiates translation of a subset of mRNAs involved in cell proliferation. This is Eukaryotic translation initiation factor 3 subunit I (eif3i) from Xenopus laevis (African clawed frog).